The chain runs to 230 residues: NADH dehydrogenase [ubiquinone] iron-sulfur protein 8, mitochondrial (230 aa).

The N-terminal 42 residues, 1–42 (MAAILARKSLSALRSRQLVLAGQAWQQGANTSNGTLLGTRTF), are a transit peptide targeting the mitochondrion. 2 consecutive 4Fe-4S ferredoxin-type domains span residues 122–151 (RRYP…IEAE) and 161–190 (TRYD…EGPN). The [4Fe-4S] cluster site is built by C131, C134, C137, C141, C170, C173, C176, and C180.

The protein belongs to the complex I 23 kDa subunit family. Complex I is composed of about 45 different subunits. This is a component of the iron-sulfur (IP) fragment of the enzyme. [4Fe-4S] cluster serves as cofactor.

The protein resides in the mitochondrion. The catalysed reaction is a ubiquinone + NADH + 5 H(+)(in) = a ubiquinol + NAD(+) + 4 H(+)(out). In terms of biological role, core subunit of the mitochondrial membrane respiratory chain NADH dehydrogenase (Complex I) that is believed to belong to the minimal assembly required for catalysis. Complex I functions in the transfer of electrons from NADH to the respiratory chain. The immediate electron acceptor for the enzyme is believed to be ubiquinone. May donate electrons to ubiquinone. The protein is NADH dehydrogenase [ubiquinone] iron-sulfur protein 8, mitochondrial of Nicotiana tabacum (Common tobacco).